The sequence spans 527 residues: UPF0053 protein YegH (527 aa).

7 consecutive transmembrane segments (helical) span residues 14–34 (ITLI…IAIL), 51–71 (LLLA…LVTL), 81–101 (FTFS…LFKA), 122–142 (GAKF…FSLD), 145–165 (ITAV…VIAI), 185–205 (IVIL…AEGF), and 207–227 (FVIP…IEAL). CBS domains lie at 306 to 366 (MTSR…GEPL) and 371 to 429 (LIRQ…PNEV).

The protein belongs to the UPF0053 family.

It is found in the cell membrane. This chain is UPF0053 protein YegH (yegH), found in Shigella flexneri.